Reading from the N-terminus, the 141-residue chain is D-aminoacyl-tRNA deacylase (141 aa).

Residues 133–134 carry the Gly-cisPro motif, important for rejection of L-amino acids motif; that stretch reads GP.

The protein belongs to the DTD family. In terms of assembly, homodimer.

It localises to the cytoplasm. The enzyme catalyses glycyl-tRNA(Ala) + H2O = tRNA(Ala) + glycine + H(+). The catalysed reaction is a D-aminoacyl-tRNA + H2O = a tRNA + a D-alpha-amino acid + H(+). Its function is as follows. An aminoacyl-tRNA editing enzyme that deacylates mischarged D-aminoacyl-tRNAs. Also deacylates mischarged glycyl-tRNA(Ala), protecting cells against glycine mischarging by AlaRS. Acts via tRNA-based rather than protein-based catalysis; rejects L-amino acids rather than detecting D-amino acids in the active site. By recycling D-aminoacyl-tRNA to D-amino acids and free tRNA molecules, this enzyme counteracts the toxicity associated with the formation of D-aminoacyl-tRNA entities in vivo and helps enforce protein L-homochirality. The sequence is that of D-aminoacyl-tRNA deacylase from Nautilia profundicola (strain ATCC BAA-1463 / DSM 18972 / AmH).